Consider the following 683-residue polypeptide: Methionine--tRNA ligase (683 aa).

A 'HIGH' region motif is present at residues 14-24 (PYANGSIHLGH). Zn(2+)-binding residues include Cys-145, Cys-148, Cys-158, and Cys-161. A 'KMSKS' region motif is present at residues 331–335 (KMSKS). An ATP-binding site is contributed by Lys-334. Residues 545–572 (ASKEDLTASQTDTGAAAPAGNGELAKDP) are disordered. The tRNA-binding domain maps to 581-683 (TFAAVDLRVA…SGAKPGQRIK (103 aa)).

The protein belongs to the class-I aminoacyl-tRNA synthetase family. MetG type 1 subfamily. In terms of assembly, homodimer. Requires Zn(2+) as cofactor.

The protein localises to the cytoplasm. The enzyme catalyses tRNA(Met) + L-methionine + ATP = L-methionyl-tRNA(Met) + AMP + diphosphate. Its function is as follows. Is required not only for elongation of protein synthesis but also for the initiation of all mRNA translation through initiator tRNA(fMet) aminoacylation. The polypeptide is Methionine--tRNA ligase (Pseudomonas fluorescens (strain Pf0-1)).